A 685-amino-acid polypeptide reads, in one-letter code: Tripartite terminase subunit 1 (685 aa).

The C3H1-type zinc finger occupies 173–201 (CWRCVGELMVLPNHGNPSTAEGTHVSCNH). Disordered stretches follow at residues 231–254 (EEKA…EAEG) and 394–423 (LGRG…SGAL). A compositionally biased stretch (basic and acidic residues) spans 395-407 (GRGEEEASRESPE). 619–626 (YNKTWGRS) is a binding site for ATP.

The protein belongs to the herpesviridae TRM1 protein family. In terms of assembly, associates with TRM2 and TRM3 to form the tripartite terminase complex. Interacts with portal protein.

Its subcellular location is the host nucleus. Component of the molecular motor that translocates viral genomic DNA in empty capsid during DNA packaging. Forms a tripartite terminase complex together with TRM2 and TRM3 in the host cytoplasm. Once the complex reaches the host nucleus, it interacts with the capsid portal vertex. This portal forms a ring in which genomic DNA is translocated into the capsid. TRM1 carries an endonuclease activity that plays an important role for the cleavage of concatemeric viral DNA into unit length genomes. This is Tripartite terminase subunit 1 from Epstein-Barr virus (strain B95-8) (HHV-4).